The primary structure comprises 656 residues: uncharacterized protein (656 aa).

Residues 623–656 (EIDIPGTPASIDPEWSRPPGSITDDHVFDAPLHR) are disordered. Residues 645-656 (TDDHVFDAPLHR) are compositionally biased toward basic and acidic residues.

This is an uncharacterized protein from Mycobacterium tuberculosis (strain ATCC 25618 / H37Rv).